The following is a 305-amino-acid chain: Glycerol-3-phosphate dehydrogenase [NAD(P)+] (305 aa).

NADPH contacts are provided by Phe10, Arg29, and Lys87. The sn-glycerol 3-phosphate site is built by Lys87, Gly115, and Ser117. Residue Ala119 participates in NADPH binding. Residues Lys170, Asp223, Ser233, Arg234, and Asn235 each coordinate sn-glycerol 3-phosphate. Lys170 acts as the Proton acceptor in catalysis. Arg234 lines the NADPH pocket. Glu255 contributes to the NADPH binding site.

It belongs to the NAD-dependent glycerol-3-phosphate dehydrogenase family.

Its subcellular location is the cytoplasm. It carries out the reaction sn-glycerol 3-phosphate + NAD(+) = dihydroxyacetone phosphate + NADH + H(+). The enzyme catalyses sn-glycerol 3-phosphate + NADP(+) = dihydroxyacetone phosphate + NADPH + H(+). It participates in membrane lipid metabolism; glycerophospholipid metabolism. Its function is as follows. Catalyzes the reduction of the glycolytic intermediate dihydroxyacetone phosphate (DHAP) to sn-glycerol 3-phosphate (G3P), the key precursor for phospholipid synthesis. This is Glycerol-3-phosphate dehydrogenase [NAD(P)+] from Cereibacter sphaeroides (strain ATCC 17023 / DSM 158 / JCM 6121 / CCUG 31486 / LMG 2827 / NBRC 12203 / NCIMB 8253 / ATH 2.4.1.) (Rhodobacter sphaeroides).